The primary structure comprises 503 residues: MRGKIKILDIETGNLAIFINPEDAEQWRIHPNDLVKIESGKRYIYGSAFIGNIVEKGEIGISKDVLSIHQFSNGEIVSLSPAGTPESVKYIKKKMRGEKLKKVEIETIVRDIVDRKLRNTEISAFVSAIEINGLDMEEIAALTIAMAETGDMLDIERKPIMDIHSIGGVPGNKTNVIVVPIVAAAGLTIPKTSSRAITSAAGTADVVEVLTNVTLTLEEIKRIVEKIGACLVWGGALNLAPADDLMIHVERRLSLDPRGLMLASIMAKKYAIGSQYILIDIPTGKGAKVESMEEARSLARDFIELGKRLGQYVEVAITYGGQPIGYTVGPALEAKEALETLMTGRGPGSLVEKAIGLAGLLLEMGGAAPKGKGKIIAREILEKGKAYQKMREIIEEQGGDPDIKPEDIPIGDKTYTIHAQTNGYVTAIDNRGITAIAREAGAPEDKGAGIRLHVKVGDKVKEGDPLFTIHAESESRLDKAIVLARRLEPIKIEGMVLQVIENL.

AMP-binding positions include G168, 194–199, and T203; that span reads SRAITS. D256 functions as the Proton donor in the catalytic mechanism. S264 and K288 together coordinate AMP.

This sequence belongs to the thymidine/pyrimidine-nucleoside phosphorylase family. Type 2 subfamily.

It carries out the reaction AMP + phosphate = alpha-D-ribose 1,5-bisphosphate + adenine. The enzyme catalyses CMP + phosphate = cytosine + alpha-D-ribose 1,5-bisphosphate. The catalysed reaction is UMP + phosphate = alpha-D-ribose 1,5-bisphosphate + uracil. Functionally, catalyzes the conversion of AMP and phosphate to adenine and ribose 1,5-bisphosphate (R15P). Exhibits phosphorylase activity toward CMP and UMP in addition to AMP. Functions in an archaeal AMP degradation pathway, together with R15P isomerase and RubisCO. The chain is AMP phosphorylase from Pyrococcus furiosus (strain ATCC 43587 / DSM 3638 / JCM 8422 / Vc1).